The primary structure comprises 202 residues: Na(+)-translocating NADH-quinone reductase subunit E (202 aa).

6 helical membrane-spanning segments follow: residues 11–31, 39–59, 79–99, 114–134, 144–164, and 180–200; these read SIFIENLALAFFLGMCTYLAV, MGLGVAVIVVMTITVPVNNLL, LTFVGLISYIGVIAAIVQILE, GIFLPLITVNCAILGASLFMV, VTFGFGSGVGWALAIVLLAGI, and LGITFIVVGLMSFGFLSFSGI.

The protein belongs to the NqrDE/RnfAE family. In terms of assembly, composed of six subunits; NqrA, NqrB, NqrC, NqrD, NqrE and NqrF.

It is found in the cell inner membrane. The enzyme catalyses a ubiquinone + n Na(+)(in) + NADH + H(+) = a ubiquinol + n Na(+)(out) + NAD(+). Functionally, NQR complex catalyzes the reduction of ubiquinone-1 to ubiquinol by two successive reactions, coupled with the transport of Na(+) ions from the cytoplasm to the periplasm. NqrA to NqrE are probably involved in the second step, the conversion of ubisemiquinone to ubiquinol. The sequence is that of Na(+)-translocating NADH-quinone reductase subunit E from Maridesulfovibrio salexigens (strain ATCC 14822 / DSM 2638 / NCIMB 8403 / VKM B-1763) (Desulfovibrio salexigens).